The sequence spans 189 residues: Elongation factor P (189 aa).

It belongs to the elongation factor P family.

The protein localises to the cytoplasm. Its pathway is protein biosynthesis; polypeptide chain elongation. In terms of biological role, involved in peptide bond synthesis. Stimulates efficient translation and peptide-bond synthesis on native or reconstituted 70S ribosomes in vitro. Probably functions indirectly by altering the affinity of the ribosome for aminoacyl-tRNA, thus increasing their reactivity as acceptors for peptidyl transferase. The polypeptide is Elongation factor P (Pseudomonas syringae pv. syringae (strain B728a)).